The primary structure comprises 454 residues: tRNA modification GTPase MnmE (454 aa).

The (6S)-5-formyl-5,6,7,8-tetrahydrofolate site is built by Arg-23, Glu-86, and Arg-125. The 156-residue stretch at 221–376 folds into the TrmE-type G domain; that stretch reads GLTLAIVGRP…LREQILRMVS (156 aa). Asn-231 contacts K(+). GTP contacts are provided by residues 231-236, 250-256, and 275-278; these read NVGKSS, TAIPGTT, and DTAG. A Mg(2+)-binding site is contributed by Ser-235. K(+) contacts are provided by Thr-250, Ile-252, and Thr-255. Thr-256 provides a ligand contact to Mg(2+). Position 454 (Lys-454) interacts with (6S)-5-formyl-5,6,7,8-tetrahydrofolate.

Belongs to the TRAFAC class TrmE-Era-EngA-EngB-Septin-like GTPase superfamily. TrmE GTPase family. In terms of assembly, homodimer. Heterotetramer of two MnmE and two MnmG subunits. K(+) serves as cofactor.

The protein localises to the cytoplasm. In terms of biological role, exhibits a very high intrinsic GTPase hydrolysis rate. Involved in the addition of a carboxymethylaminomethyl (cmnm) group at the wobble position (U34) of certain tRNAs, forming tRNA-cmnm(5)s(2)U34. This chain is tRNA modification GTPase MnmE, found in Koribacter versatilis (strain Ellin345).